A 114-amino-acid polypeptide reads, in one-letter code: uncharacterized protein (114 aa).

The region spanning 6–114 is the HIT domain; the sequence is IFGKIIRREI…GGRSLAWPPG (109 aa). The short motif at 98-102 is the Histidine triad motif element; that stretch reads HLHIH.

This is an uncharacterized protein from Synechococcus elongatus (strain ATCC 33912 / PCC 7942 / FACHB-805) (Anacystis nidulans R2).